The following is a 406-amino-acid chain: 5-cytosine rRNA methyltransferase NSUN4 (406 aa).

Residues G207, G208, K209, D226, R231, D259, G260, and D277 each coordinate S-adenosyl-L-methionine. C332 functions as the Nucleophile in the catalytic mechanism.

Belongs to the class I-like SAM-binding methyltransferase superfamily. RsmB/NOP family.

It is found in the mitochondrion. It catalyses the reaction a cytidine in rRNA + S-adenosyl-L-methionine = a 5-methylcytidine in rRNA + S-adenosyl-L-homocysteine + H(+). The catalysed reaction is a cytidine in mRNA + S-adenosyl-L-methionine = a 5-methylcytidine in mRNA + S-adenosyl-L-homocysteine + H(+). Mitochondrial RNA cytosine C(5)-methyltransferase that methylates cytosine to 5-methylcytosine (m5C) in various RNAs, such as rRNAs, mRNAs and some long non-coding RNAs (lncRNAs). Involved in mitochondrial ribosome small subunit (SSU) maturation by catalyzing methylation of mitochondrial 12S rRNA. The protein is 5-cytosine rRNA methyltransferase NSUN4 (nsun4) of Xenopus laevis (African clawed frog).